The sequence spans 88 residues: Putative sulfur carrier protein AF_0554 (88 aa).

Catalysis depends on cysteine 26, which acts as the Cysteine persulfide intermediate.

This sequence belongs to the sulfur carrier protein TusA family.

The protein is Putative sulfur carrier protein AF_0554 of Archaeoglobus fulgidus (strain ATCC 49558 / DSM 4304 / JCM 9628 / NBRC 100126 / VC-16).